A 201-amino-acid chain; its full sequence is Hydroxymethylphosphonate dioxygenase (201 aa).

Fe cation is bound by residues His-47, His-71, Asp-72, His-94, His-117, and Asp-174.

The cofactor is Fe(2+).

It carries out the reaction hydroxymethylphosphonate + O2 = formate + phosphate + 2 H(+). It catalyses the reaction (1R)-(2-amino-1-hydroxyethyl)phosphonate + O2 = glycine + phosphate + 2 H(+). The catalysed reaction is (1R)-(1-hydroxyethyl)phosphonate + O2 = acetate + phosphate + 2 H(+). Part of an oxidative pathway for utilization of methylphosphonic acid as a phosphate source. Catalyzes the oxidation of hydroxymethylphosphonic acid to produce formate and phosphate. Can also use (1R)-(2-amino-1-hydroxyethyl)phosphonic acid and (R)-1-hydroxyethylphosphonic acid with similar catalytic efficiency. The sequence is that of Hydroxymethylphosphonate dioxygenase from Gimesia maris (strain ATCC 29201 / DSM 8797 / 534-30) (Planctomyces maris).